A 333-amino-acid chain; its full sequence is MHLDHKLPWKTIASHFTLARDGSSPNYNLIALGLSTQDAALGHFSRIFIATIEEFSNTETSKINLNQVDGKLFSDDVLNFPEHHFGLGPHDTNSALNNPLDAKHQELKYWKGRASTASEYGTSPEYSASYSTADGDLADAAKMLVITAAVSDNQAIRREALSALCQLSAHVPMSDLRGLSWGHGFGLSLVASEALKLYMLLNLIEAVQSRGAQQVSLLRVKILLCALGNYSLQNYDFPAQNIPHRAFWHSLGITESWADRQADGVRESDEPVVDPLGLGDDEIHQEARINLKKYLKDCFAILYVYDVFLKQIASEEERKEFWSYEINRVILYL.

Its pathway is mycotoxin biosynthesis. Its function is as follows. Part of the gene cluster that mediates the biosynthesis of gramillins A and B, bicyclic lipopeptides that induce cell death in maize leaves but not in wheat leaves. The nonribosomal peptide synthetase GRA1 incorporates respectively a glutamic adic (Glu), a leucine (Leu), a serine (Ser), a hydroxyglutamine (HOGln), a 2-amino decanoic acid, and 2 cysteins (CysB and CysA). The biosynthesis of 2-amino decanoic acid incorporated in gramillins could be initiated by a fatty acid synthase composed of the alpha and beta subunits FGSG_00036 and FGSG_11656. The cytochrome P450 monooxygenase FGSG_15680 could hydroxylate the fatty acid chain. Subsequent oxidation to the ketone by the oxidoreductase FGSG_00048 and transamination by aminotransferase FGSG_00049 could form 2-amino-decanoic acid. On the other hand, FGSG_15680 could also be responsible for the HO-modified glutamine at the gamma-position. Whether hydroxylation occurs on the fully assembled product or on the Gln residue prior to assembly into the gramillins requires further proof. The thioredoxin FGSG_00043 could also be required for the disulfide-bond formation between CysA and CysB. The specific involvement of the remaining proteins from the cluster is more difficult to discern, but could have broader regulatory (FGSG_00040 and FGSG_11657) or enzymatic functions (FGSG_00044 and FGSG_00045). The final C-domain of GRA1 does not possess the expected sequence of a termination CT domain, often implicated in macrocyclization and release of a cyclopeptidein fungal NRPs; and the thioesterase FGSG_00047 may act in concert with the terminal C-domain of GRA1 to catalyze the formation of the macrocyclic anhydride and release of the products. This is Gramillins biosynthetic cluster protein FGSG_00039 from Gibberella zeae (strain ATCC MYA-4620 / CBS 123657 / FGSC 9075 / NRRL 31084 / PH-1) (Wheat head blight fungus).